A 164-amino-acid chain; its full sequence is Anthrone oxygenase AgnL2 (164 aa).

3 consecutive transmembrane segments (helical) span residues 11–31 (VVTG…AVPV), 48–70 (RMYH…LYAY), and 85–105 (VFAL…LCMV).

The protein belongs to the anthrone oxygenase family.

It is found in the membrane. The enzyme catalyses emodin anthrone + O2 = emodin + H2O + H(+). Its pathway is secondary metabolite biosynthesis. Anthrone oxygenase; part of the gene cluster that mediates the biosynthesis of agnestins, dihydroxy-xanthone metabolites. The pathway begins with the assembly and cyclization of atrochrysone thioester by the non-reducing polyketide synthase Agnpks1. The atrochrysone carboxyl ACP thioesterase AgnL7 then breaks the thioester bond and releases the atrochrysone carboxylic acid as the first enzyme-free intermediate. The decarboxylase AgnL1 then catalyzes the concerted decarboxylation-elimination required to convert atochrysone carboxylic acid into emodin anthrone, which is further oxidized to emodin by the anthrone oxygenase AgnL2. Emodin then undergoes reduction catalyzed by the oxidoreductase AgnL4 to yield the dihydroquinone tautomer which is the substrate for reduction by the short chain dehydrogenase AgnL6 reduction to produce hydroxyketone, followed by AgnL8 dehydration and likely spontaneous autoxidation to chrysophanol. Baeyer-Villiger oxidation by the oxidase AgnL3 leads to monodictyphenone via cleavage of the C-10/C-10a bond of chrysophanol. Alternative cleavage at the C-4a/C-10 bond of chrysophanol also leads to the formation some cephalone F. Further conversion to agnestins A and B, requires reduction to dihydro-monodictyphenone, oxidation to agnestin C probably via an epoxide, and rearrangement to either agnestin A or agnestin B directly, although agnestin A or agnestin B can also interconvert. Within the cluster, AgnR1 is the only unassigned oxidoreductase present which could be involved in this conversion. However, AgnR1 seems not to be involved in this step, and thus genes involved in the proposed oxidation/reduction may be located elsewhere on the genome. Further agnestin A derivatives are probably formed by spontaneous decarboxylations, dehydrations and methanolysis reactions. This Paecilomyces divaricatus (Penicillium divaricatum) protein is Anthrone oxygenase AgnL2.